The primary structure comprises 577 residues: Urease subunit alpha (577 aa).

The 442-residue stretch at 136–577 folds into the Urease domain; that stretch reads GTVDCHVHLI…LPMTQRYFLF (442 aa). Ni(2+) is bound by residues His-141, His-143, and Lys-224. At Lys-224 the chain carries N6-carboxylysine. Position 226 (His-226) interacts with substrate. His-253 and His-279 together coordinate Ni(2+). Catalysis depends on His-327, which acts as the Proton donor. Asp-367 is a Ni(2+) binding site.

Belongs to the metallo-dependent hydrolases superfamily. Urease alpha subunit family. In terms of assembly, heterotrimer of UreA (gamma), UreB (beta) and UreC (alpha) subunits. Three heterotrimers associate to form the active enzyme. It depends on Ni cation as a cofactor. Carboxylation allows a single lysine to coordinate two nickel ions.

Its subcellular location is the cytoplasm. The enzyme catalyses urea + 2 H2O + H(+) = hydrogencarbonate + 2 NH4(+). It functions in the pathway nitrogen metabolism; urea degradation; CO(2) and NH(3) from urea (urease route): step 1/1. The chain is Urease subunit alpha from Mycobacterium bovis (strain ATCC BAA-935 / AF2122/97).